Reading from the N-terminus, the 387-residue chain is Patatin-12 (387 aa).

An N-terminal signal peptide occupies residues Met-1 to Ala-23. In terms of domain architecture, PNPLA spans Leu-32–Leu-230. Residues Gly-36–Gly-41 carry the GXGXXG motif. A GXSXG motif is present at residues Gly-75–Gly-79. Catalysis depends on Ser-77, which acts as the Nucleophile. Asn-115 carries an N-linked (GlcNAc...) asparagine glycan. Asp-216 functions as the Proton acceptor in the catalytic mechanism. Positions Asp-216–Gly-218 match the DGA/G motif. A coiled-coil region spans residues Glu-322–Ala-385.

This sequence belongs to the patatin family. Tuber.

It localises to the vacuole. Functionally, probable lipolytic acyl hydrolase (LAH), an activity which is thought to be involved in the response of tubers to pathogens. The chain is Patatin-12 from Solanum tuberosum (Potato).